The sequence spans 501 residues: tRNA (guanine(37)-N(1))-methyltransferase (501 aa).

Residues histidine 282, 320 to 321 (DL), 348 to 349 (DG), and asparagine 380 contribute to the S-adenosyl-L-methionine site. The disordered stretch occupies residues 474–501 (LQNDQEPPLKRQKTGDPFSGEPQIASDS).

This sequence belongs to the class I-like SAM-binding methyltransferase superfamily. TRM5/TYW2 family. As to quaternary structure, monomer.

Its subcellular location is the mitochondrion matrix. The protein resides in the nucleus. It is found in the cytoplasm. The enzyme catalyses guanosine(37) in tRNA + S-adenosyl-L-methionine = N(1)-methylguanosine(37) in tRNA + S-adenosyl-L-homocysteine + H(+). Functionally, involved in mitochondrial tRNA methylation. Specifically methylates the N1 position of guanosine-37 in various tRNAs. Methylation is not dependent on the nature of the nucleoside 5' of the target nucleoside. This is the first step in the biosynthesis of wybutosine (yW), a modified base adjacent to the anticodon of tRNAs and required for accurate decoding. The polypeptide is tRNA (guanine(37)-N(1))-methyltransferase (Trmt5) (Mus musculus (Mouse)).